The following is a 251-amino-acid chain: Aspartate/glutamate leucyltransferase (251 aa).

This sequence belongs to the R-transferase family. Bpt subfamily.

Its subcellular location is the cytoplasm. It carries out the reaction N-terminal L-glutamyl-[protein] + L-leucyl-tRNA(Leu) = N-terminal L-leucyl-L-glutamyl-[protein] + tRNA(Leu) + H(+). The catalysed reaction is N-terminal L-aspartyl-[protein] + L-leucyl-tRNA(Leu) = N-terminal L-leucyl-L-aspartyl-[protein] + tRNA(Leu) + H(+). In terms of biological role, functions in the N-end rule pathway of protein degradation where it conjugates Leu from its aminoacyl-tRNA to the N-termini of proteins containing an N-terminal aspartate or glutamate. In Xanthomonas oryzae pv. oryzae (strain MAFF 311018), this protein is Aspartate/glutamate leucyltransferase.